The following is a 344-amino-acid chain: 2-aminoethylphosphonate--pyruvate transaminase (344 aa).

Lysine 194 is modified (N6-(pyridoxal phosphate)lysine).

It belongs to the class-V pyridoxal-phosphate-dependent aminotransferase family. PhnW subfamily. Homodimer. Pyridoxal 5'-phosphate serves as cofactor.

It catalyses the reaction (2-aminoethyl)phosphonate + pyruvate = phosphonoacetaldehyde + L-alanine. Its function is as follows. Involved in phosphonate degradation. The sequence is that of 2-aminoethylphosphonate--pyruvate transaminase from Bacillus cereus.